The following is a 432-amino-acid chain: MAEWKEEVEVLVQRVVKDITGAFRRNPNIDEIGLIPCPEAKYNRSPIVLVENKLGVESWCIKFLLPYVHNKLLLYRQKKLWLNRDELIDVTCTLLLLNPDFTTAWNVRKELIQSGTLNPVKDLQLGKLALTKFPKSPETWIHRRWALQRLVQELVVAAVVDKDAICPETSERIQAIVEEEMHVCCEAAGRYPSNYNSWSHRIWVVQHLGNLKATLLIDELSSTKHWVSMHVSDHSGFHYRQFLLKSLLSKTLKDFDNVGAITDLIANEENLCLPRDGEANWNQICFDLPYLLEEEMDLNRELVDSFPGHETLWCHRRQIFNLIHQLLLEQSQSATPQSTSASIPDGSGNISQMSTTFQSYVTNPMDIDGMSDPNKQGYTQEIKRLKRAPVQDSLSFDSELRFINCVLTNCCSPEQSRFAASYRKWLLSLQGH.

PFTA repeat units follow at residues E86–P119, K121–L154, E179–K212, D218–T251, E294–L327, and S395–H432.

The protein belongs to the protein prenyltransferase subunit alpha family.

In Xenopus laevis (African clawed frog), this protein is Protein prenyltransferase alpha subunit repeat-containing protein 1-A (ptar1-a).